Here is a 103-residue protein sequence, read N- to C-terminus: Large ribosomal subunit protein uL23 (103 aa).

The protein belongs to the universal ribosomal protein uL23 family. Part of the 50S ribosomal subunit. Contacts protein L29, and trigger factor when it is bound to the ribosome.

One of the early assembly proteins it binds 23S rRNA. One of the proteins that surrounds the polypeptide exit tunnel on the outside of the ribosome. Forms the main docking site for trigger factor binding to the ribosome. The chain is Large ribosomal subunit protein uL23 from Aquifex aeolicus (strain VF5).